A 397-amino-acid polypeptide reads, in one-letter code: Acetate kinase (397 aa).

Residue Asn7 participates in Mg(2+) binding. Residue Lys14 coordinates ATP. Arg91 is a substrate binding site. Asp147 acts as the Proton donor/acceptor in catalysis. ATP-binding positions include 207–211 (HLGNG), 282–284 (DFR), and 330–334 (GLGEN). Glu383 contributes to the Mg(2+) binding site.

It belongs to the acetokinase family. Homodimer. It depends on Mg(2+) as a cofactor. Requires Mn(2+) as cofactor.

The protein localises to the cytoplasm. It catalyses the reaction acetate + ATP = acetyl phosphate + ADP. It functions in the pathway metabolic intermediate biosynthesis; acetyl-CoA biosynthesis; acetyl-CoA from acetate: step 1/2. Its function is as follows. Catalyzes the formation of acetyl phosphate from acetate and ATP. Can also catalyze the reverse reaction. The chain is Acetate kinase from Moorella thermoacetica (strain ATCC 39073 / JCM 9320).